The sequence spans 228 residues: Octanoyltransferase (228 aa).

The region spanning 30–213 (NKVEDIMLLL…YFSRVFDFEP (184 aa)) is the BPL/LPL catalytic domain. Substrate-binding positions include 75 to 82 (RGGDVTYH), 143 to 145 (AIG), and 156 to 158 (GFA). The active-site Acyl-thioester intermediate is Cys174.

This sequence belongs to the LipB family.

Its subcellular location is the cytoplasm. The enzyme catalyses octanoyl-[ACP] + L-lysyl-[protein] = N(6)-octanoyl-L-lysyl-[protein] + holo-[ACP] + H(+). It functions in the pathway protein modification; protein lipoylation via endogenous pathway; protein N(6)-(lipoyl)lysine from octanoyl-[acyl-carrier-protein]: step 1/2. Functionally, catalyzes the transfer of endogenously produced octanoic acid from octanoyl-acyl-carrier-protein onto the lipoyl domains of lipoate-dependent enzymes. Lipoyl-ACP can also act as a substrate although octanoyl-ACP is likely to be the physiological substrate. The chain is Octanoyltransferase from Desulforamulus reducens (strain ATCC BAA-1160 / DSM 100696 / MI-1) (Desulfotomaculum reducens).